Here is a 173-residue protein sequence, read N- to C-terminus: Adenine phosphoribosyltransferase (173 aa).

It belongs to the purine/pyrimidine phosphoribosyltransferase family. In terms of assembly, homodimer.

The protein resides in the cytoplasm. It carries out the reaction AMP + diphosphate = 5-phospho-alpha-D-ribose 1-diphosphate + adenine. Its pathway is purine metabolism; AMP biosynthesis via salvage pathway; AMP from adenine: step 1/1. Catalyzes a salvage reaction resulting in the formation of AMP, that is energically less costly than de novo synthesis. This is Adenine phosphoribosyltransferase from Methanococcus vannielii (strain ATCC 35089 / DSM 1224 / JCM 13029 / OCM 148 / SB).